Consider the following 449-residue polypeptide: Bifunctional protein GlmU (449 aa).

Positions 1–226 (MVIVAVLAAG…YEEILGVNDR (226 aa)) are pyrophosphorylase. Residues 7 to 10 (LAAG), Lys21, Gln73, and 78 to 79 (GT) contribute to the UDP-N-acetyl-alpha-D-glucosamine site. Asp103 contacts Mg(2+). Positions 140, 155, 170, and 224 each coordinate UDP-N-acetyl-alpha-D-glucosamine. Position 224 (Asn224) interacts with Mg(2+). Positions 227-247 (VQLAAAYQVLQNRIKKAWMQA) are linker. Residues 248–449 (GVTLIDPASI…VVKPNWEPEA (202 aa)) are N-acetyltransferase. 2 residues coordinate UDP-N-acetyl-alpha-D-glucosamine: Arg329 and Lys347. His359 serves as the catalytic Proton acceptor. 2 residues coordinate UDP-N-acetyl-alpha-D-glucosamine: Tyr362 and Asn373. Residues Ala376, 382 to 383 (NY), Ala419, and Arg436 contribute to the acetyl-CoA site.

This sequence in the N-terminal section; belongs to the N-acetylglucosamine-1-phosphate uridyltransferase family. The protein in the C-terminal section; belongs to the transferase hexapeptide repeat family. In terms of assembly, homotrimer. Mg(2+) serves as cofactor.

Its subcellular location is the cytoplasm. It carries out the reaction alpha-D-glucosamine 1-phosphate + acetyl-CoA = N-acetyl-alpha-D-glucosamine 1-phosphate + CoA + H(+). The catalysed reaction is N-acetyl-alpha-D-glucosamine 1-phosphate + UTP + H(+) = UDP-N-acetyl-alpha-D-glucosamine + diphosphate. It functions in the pathway nucleotide-sugar biosynthesis; UDP-N-acetyl-alpha-D-glucosamine biosynthesis; N-acetyl-alpha-D-glucosamine 1-phosphate from alpha-D-glucosamine 6-phosphate (route II): step 2/2. It participates in nucleotide-sugar biosynthesis; UDP-N-acetyl-alpha-D-glucosamine biosynthesis; UDP-N-acetyl-alpha-D-glucosamine from N-acetyl-alpha-D-glucosamine 1-phosphate: step 1/1. The protein operates within bacterial outer membrane biogenesis; LPS lipid A biosynthesis. Catalyzes the last two sequential reactions in the de novo biosynthetic pathway for UDP-N-acetylglucosamine (UDP-GlcNAc). The C-terminal domain catalyzes the transfer of acetyl group from acetyl coenzyme A to glucosamine-1-phosphate (GlcN-1-P) to produce N-acetylglucosamine-1-phosphate (GlcNAc-1-P), which is converted into UDP-GlcNAc by the transfer of uridine 5-monophosphate (from uridine 5-triphosphate), a reaction catalyzed by the N-terminal domain. This Thermosynechococcus vestitus (strain NIES-2133 / IAM M-273 / BP-1) protein is Bifunctional protein GlmU.